The sequence spans 372 residues: Glutamate 5-kinase (372 aa).

K14 provides a ligand contact to ATP. Substrate-binding residues include S54, D141, and N153. 173 to 174 (TD) contacts ATP. Residues 280–358 (RGTLVLDDGA…ESIVRELGYM (79 aa)) form the PUA domain.

Belongs to the glutamate 5-kinase family.

The protein localises to the cytoplasm. The enzyme catalyses L-glutamate + ATP = L-glutamyl 5-phosphate + ADP. Its pathway is amino-acid biosynthesis; L-proline biosynthesis; L-glutamate 5-semialdehyde from L-glutamate: step 1/2. Catalyzes the transfer of a phosphate group to glutamate to form L-glutamate 5-phosphate. In Pseudomonas syringae pv. syringae (strain B728a), this protein is Glutamate 5-kinase.